We begin with the raw amino-acid sequence, 228 residues long: Protein 33K (228 aa).

The segment at 1–156 is disordered; it reads MAPKKKLQLP…GALRLAPNEP (156 aa). Acidic residues predominate over residues 15–53; it reads TDEEEYWDSQAEEVLDEEEEMMEDWDSLDEASEAEEVSD. 2 stretches are compositionally biased toward low complexity: residues 54 to 63 and 104 to 119; these read ETPSPSVAFP and AAPTAPAAAAAAATAA. A necessary for nuclear subcellular location region spans residues 171-198; sequence YAIFQQSRGQEQELKIKNRSLRSLTRSC. An RS-repeat; required for splicing enhancer activity region spans residues 177 to 197; that stretch reads SRGQEQELKIKNRSLRSLTRS.

This sequence belongs to the adenoviridae splicing factor family. Homooligomer. Interacts with DBP; this interaction occurs at a unique vertex during genome packaging. Interacts with IVa2; this interaction occurs at a unique vertex during genome packaging and seems to potentiate IVa2 and 33K oligomerization. Phosphorylated in vitro by human PKA and PRKDC. PRKDC inhibits, whereas PKA activates the splicing factor.

The protein localises to the host nucleus. Functionally, promotes alternative splicing of late transcripts by promoting splicing at weak 3' splice sites. Required for the temporal activation of major late pre-mRNA splicing at late times of infection. Induces the splicing and expression of the late capsid vertex protein. Probably functions as the small terminase that is part of the molecular motor that translocates genomic DNA in empty capsid during DNA packaging. This motor is located at a unique vertex and comprises at least the IVa2 ATPase, the small terminase 33K and probably a portal. Forms a ring-like structure of about 17 nm in which genomic DNA is translocated into the capsid. Stimulates IVa2 ATPase activity in the presence of the viral genome. Once the DNA is packaged, the terminase detaches: the 33K protein is present in the empty particles, but not in the mature virions. Also involved in virion assembly. The sequence is that of Protein 33K from Homo sapiens (Human).